The following is a 137-amino-acid chain: Small ribosomal subunit protein uS9 (137 aa).

This sequence belongs to the universal ribosomal protein uS9 family.

The sequence is that of Small ribosomal subunit protein uS9 (rps9) from Sulfurisphaera tokodaii (strain DSM 16993 / JCM 10545 / NBRC 100140 / 7) (Sulfolobus tokodaii).